A 316-amino-acid polypeptide reads, in one-letter code: uncharacterized protein (316 aa).

Disordered stretches follow at residues 82-105 (AMAAASTGAGSSSGTNVGGSSGGN) and 238-257 (ASVSVQTTQQSRQQSTDTQE). 2 stretches are compositionally biased toward low complexity: residues 84-96 (AAASTGAGSSSGT) and 239-255 (SVSVQTTQQSRQQSTDT).

It belongs to the MG307/MG309/MG338 family.

This is an uncharacterized protein from Mycoplasma pneumoniae (strain ATCC 29342 / M129 / Subtype 1) (Mycoplasmoides pneumoniae).